A 348-amino-acid chain; its full sequence is Ileal sodium/bile acid cotransporter (348 aa).

The Extracellular segment spans residues 1 to 28 (MNDPNSCVDNATVCSGASCVVPESNFNN). Asn10 carries an N-linked (GlcNAc...) asparagine glycan. A helical membrane pass occupies residues 29 to 49 (ILSVVLSTVLTILLALVMFSM). The Cytoplasmic portion of the chain corresponds to 50 to 82 (GCNVEIKKFLGHIKRPWGICVGFLCQFGIMPLT). Residues 83–103 (GFILSVAFDILPLQAVVVLII) traverse the membrane as a helical segment. The Extracellular segment spans residues 104 to 126 (GCCPGGTASNILAYWVDGDMDLS). A helical transmembrane segment spans residues 127–147 (VSMTTCSTLLALGMMPLCLLI). Over 148–157 (YTKMWVDSGS) the chain is Cytoplasmic. A helical membrane pass occupies residues 158–178 (IVIPYDNIGTSLVSLVVPVSI). Residues 179-195 (GMFVNHKWPQKAKIILK) are Extracellular-facing. The helical transmembrane segment at 196–216 (IGSIAGAILIVLIAVVGGILY) threads the bilayer. The Cytoplasmic segment spans residues 217–224 (QSAWIIAP). Residues 225-245 (KLWIIGTIFPVAGYSLGFLLA) traverse the membrane as a helical segment. The Extracellular segment spans residues 246 to 284 (RIAGLPWYRCRTVAFETGMQNTQLCSTIVQLSFTPEELN). Residues 285–305 (VVFTFPLIYSIFQLAFAAIFL) traverse the membrane as a helical segment. At 306–348 (GFYVAYKKCHGKNKAEIPESKENGTEPESSFYKANGGFQPDEK) the chain is on the cytoplasmic side. The span at 320–329 (AEIPESKENG) shows a compositional bias: basic and acidic residues. The tract at residues 320-348 (AEIPESKENGTEPESSFYKANGGFQPDEK) is disordered. Position 335 is a phosphoserine (Ser335).

The protein belongs to the bile acid:sodium symporter (BASS) (TC 2.A.28) family. In terms of assembly, monomer and homodimer. In terms of tissue distribution, mainly expressed in ileum and kidney, lower expression in cecum.

It is found in the membrane. The enzyme catalyses taurocholate(out) + 2 Na(+)(out) = taurocholate(in) + 2 Na(+)(in). The catalysed reaction is cholate(out) + 2 Na(+)(out) = cholate(in) + 2 Na(+)(in). It carries out the reaction taurochenodeoxycholate(out) + 2 Na(+)(out) = taurochenodeoxycholate(in) + 2 Na(+)(in). It catalyses the reaction tauroursodeoxycholate(out) + 2 Na(+)(out) = tauroursodeoxycholate(in) + 2 Na(+)(in). The enzyme catalyses glycocholate(out) + 2 Na(+)(out) = glycocholate(in) + 2 Na(+)(in). The catalysed reaction is tauronorcholate(out) + 2 Na(+)(out) = tauronorcholate(in) + 2 Na(+)(in). It carries out the reaction tauroallocholate(out) + 2 Na(+)(out) = tauroallocholate(in) + 2 Na(+)(in). It catalyses the reaction taurodeoxycholate(out) + 2 Na(+)(out) = taurodeoxycholate(in) + 2 Na(+)(in). The enzyme catalyses tauro-beta-muricholate(out) + 2 Na(+)(out) = tauro-beta-muricholate(in) + 2 Na(+)(in). Functionally, plays a critical role in the sodium-dependent reabsorption of bile acids from the lumen of the small intestine. Transports various bile acids, unconjugated or conjugated, such as cholate and taurocholate. Also responsible for bile acid transport in the renal proximal tubules, a salvage mechanism that helps conserve bile acids. Works collaboratively with the Na(+)-taurocholate cotransporting polypeptide (NTCP), the organic solute transporter (OST), and the bile salt export pump (BSEP), to ensure efficacious biological recycling of bile acids during enterohepatic circulation. The chain is Ileal sodium/bile acid cotransporter (SLC10A2) from Homo sapiens (Human).